Here is a 220-residue protein sequence, read N- to C-terminus: ATP-dependent Clp protease proteolytic subunit (220 aa).

Serine 122 (nucleophile) is an active-site residue. Histidine 147 is an active-site residue.

Belongs to the peptidase S14 family. Fourteen ClpP subunits assemble into 2 heptameric rings which stack back to back to give a disk-like structure with a central cavity, resembling the structure of eukaryotic proteasomes.

The protein resides in the cytoplasm. It catalyses the reaction Hydrolysis of proteins to small peptides in the presence of ATP and magnesium. alpha-casein is the usual test substrate. In the absence of ATP, only oligopeptides shorter than five residues are hydrolyzed (such as succinyl-Leu-Tyr-|-NHMec, and Leu-Tyr-Leu-|-Tyr-Trp, in which cleavage of the -Tyr-|-Leu- and -Tyr-|-Trp bonds also occurs).. In terms of biological role, cleaves peptides in various proteins in a process that requires ATP hydrolysis. Has a chymotrypsin-like activity. Plays a major role in the degradation of misfolded proteins. This is ATP-dependent Clp protease proteolytic subunit from Colwellia psychrerythraea (strain 34H / ATCC BAA-681) (Vibrio psychroerythus).